A 690-amino-acid polypeptide reads, in one-letter code: Eukaryotic translation initiation factor 3 subunit B (690 aa).

Positions 1–11 are enriched in basic and acidic residues; it reads MAKKKSEEHSG. A disordered region spans residues 1–33; the sequence is MAKKKSEEHSGTDANDSDYQEEPNFDDPPGFVD. Residues 15-25 are compositionally biased toward acidic residues; it reads NDSDYQEEPNF. Residues 57 to 141 form the RRM domain; that stretch reads SVVVVDNIPK…HTFAVNLFTD (85 aa). WD repeat units lie at residues 207–246, 293–331, 334–369, 442–484, and 530–575; these read TRERFTDTFVKWSPLGTYVVTFHKPGVAIWGGSSFQKIQK, DGMSVLSMFRWSHDDKFVARMGENSIHIYETPSFYLLDL, IKIPGIRGFSWSPTDNVIAYWVEEQNQIPARVTLME, EIRE…KPSL, and PDHF…IKRT. Positions 595–645 form a coiled coil; sequence EEKQKEIKKNLKKYYAAFEQKDRLRLTRASKELLEKRSQLRETFMEYRNKR.

It belongs to the eIF-3 subunit B family. Component of the eukaryotic translation initiation factor 3 (eIF-3) complex. The eIF-3 complex interacts with pix. Interacts with mxt.

Its subcellular location is the cytoplasm. RNA-binding component of the eukaryotic translation initiation factor 3 (eIF-3) complex, which is involved in protein synthesis of a specialized repertoire of mRNAs and, together with other initiation factors, stimulates binding of mRNA and methionyl-tRNAi to the 40S ribosome. The eIF-3 complex specifically targets and initiates translation of a subset of mRNAs involved in cell proliferation. The polypeptide is Eukaryotic translation initiation factor 3 subunit B (Drosophila melanogaster (Fruit fly)).